A 198-amino-acid chain; its full sequence is Recombination protein RecR (198 aa).

The C4-type zinc-finger motif lies at 57–72; it reads CSICGNLTDQDPCAIC. Residues 80 to 175 form the Toprim domain; it reads STILIVEDSR…KVTRLARGLA (96 aa).

The protein belongs to the RecR family.

In terms of biological role, may play a role in DNA repair. It seems to be involved in an RecBC-independent recombinational process of DNA repair. It may act with RecF and RecO. This is Recombination protein RecR from Streptococcus suis (strain 05ZYH33).